We begin with the raw amino-acid sequence, 214 residues long: Acyl-homoserine-lactone synthase (214 aa).

Belongs to the autoinducer synthase family.

It carries out the reaction a fatty acyl-[ACP] + S-adenosyl-L-methionine = an N-acyl-L-homoserine lactone + S-methyl-5'-thioadenosine + holo-[ACP] + H(+). In terms of biological role, required for the synthesis of autoinducer molecules such as OHHL (N-(3-oxohexanoyl)-L-homoserine lactone), and HHL (N-hexanoyl-L-homoserine lactone). In Yersinia enterocolitica, this protein is Acyl-homoserine-lactone synthase (yenI).